Consider the following 337-residue polypeptide: Basic membrane protein A2 (337 aa).

Positions 1–17 (MNKLLLLILFECIIFLS) are cleaved as a signal peptide. Cysteine 18 carries the N-palmitoyl cysteine lipid modification. Cysteine 18 carries the S-diacylglycerol cysteine lipid modification.

The protein belongs to the BMP lipoprotein family. In terms of assembly, monomer.

The protein resides in the cell inner membrane. Its function is as follows. Immunogenic protein. May be part of an ABC-type nucleoside uptake system involved in the purine salvage pathway. The sequence is that of Basic membrane protein A2 (bmpA2) from Borrelia garinii subsp. bavariensis (strain ATCC BAA-2496 / DSM 23469 / PBi) (Borreliella bavariensis).